We begin with the raw amino-acid sequence, 453 residues long: Sensor histidine kinase CpxA (453 aa).

Topologically, residues methionine 1 to arginine 4 are cytoplasmic. A helical transmembrane segment spans residues isoleucine 5 to lysine 25. At leucine 26–arginine 159 the chain is on the periplasmic side. Residues proline 160–tryptophan 180 form a helical membrane-spanning segment. Residues tryptophan 180–threonine 233 form the HAMP domain. At serine 181–threonine 453 the chain is on the cytoplasmic side. In terms of domain architecture, Histidine kinase spans aspartate 241–lysine 451. Catalysis depends on histidine 244, which acts as the Nucleophile. Residue histidine 244 is modified to Phosphohistidine; by autocatalysis. Residues histidine 244–arginine 247, arginine 355–tyrosine 360, aspartate 382, arginine 401–threonine 402, and glycine 412–leucine 417 contribute to the ATP site.

As to quaternary structure, interacts with cognate response regulator CpxR.

The protein localises to the cell inner membrane. The catalysed reaction is ATP + protein L-histidine = ADP + protein N-phospho-L-histidine.. The two-component system is activated by envelope stress such as overexpression of some (misfolded) periplasmic proteins. Its function is as follows. Histidine kinase member of the two-component regulatory system CpxA/CpxR which responds to envelope stress response by activating or, in some cases, repressing expression of downstream genes. Activates CpxR by phosphorylation. The sequence is that of Sensor histidine kinase CpxA from Klebsiella pneumoniae subsp. pneumoniae (strain HS11286).